Reading from the N-terminus, the 63-residue chain is Large ribosomal subunit protein uL29 (63 aa).

This sequence belongs to the universal ribosomal protein uL29 family.

This Stutzerimonas stutzeri (strain A1501) (Pseudomonas stutzeri) protein is Large ribosomal subunit protein uL29.